The primary structure comprises 428 residues: Putative FBD-associated F-box protein At5g56390 (428 aa).

One can recognise an F-box domain in the interval 2–50 (DKISQLHDELLLGILSLLPNAKDVVATMVLSKRWRYLWMMVPSLVYDDS). An FBD domain is found at 344–394 (CWNETSLVPEYLLPSLETFEWVDYEGTKTEKQVVAFILRIASCLKQATIVS).

The sequence is that of Putative FBD-associated F-box protein At5g56390 from Arabidopsis thaliana (Mouse-ear cress).